Here is a 317-residue protein sequence, read N- to C-terminus: Lipoyl synthase (317 aa).

Residues methionine 1–threonine 22 form a disordered region. Basic and acidic residues predominate over residues arginine 12–threonine 22. 7 residues coordinate [4Fe-4S] cluster: cysteine 57, cysteine 62, cysteine 68, cysteine 83, cysteine 87, cysteine 90, and serine 296. The region spanning tryptophan 69 to leucine 285 is the Radical SAM core domain.

The protein belongs to the radical SAM superfamily. Lipoyl synthase family. [4Fe-4S] cluster serves as cofactor.

It is found in the cytoplasm. It carries out the reaction [[Fe-S] cluster scaffold protein carrying a second [4Fe-4S](2+) cluster] + N(6)-octanoyl-L-lysyl-[protein] + 2 oxidized [2Fe-2S]-[ferredoxin] + 2 S-adenosyl-L-methionine + 4 H(+) = [[Fe-S] cluster scaffold protein] + N(6)-[(R)-dihydrolipoyl]-L-lysyl-[protein] + 4 Fe(3+) + 2 hydrogen sulfide + 2 5'-deoxyadenosine + 2 L-methionine + 2 reduced [2Fe-2S]-[ferredoxin]. It participates in protein modification; protein lipoylation via endogenous pathway; protein N(6)-(lipoyl)lysine from octanoyl-[acyl-carrier-protein]: step 2/2. Functionally, catalyzes the radical-mediated insertion of two sulfur atoms into the C-6 and C-8 positions of the octanoyl moiety bound to the lipoyl domains of lipoate-dependent enzymes, thereby converting the octanoylated domains into lipoylated derivatives. This is Lipoyl synthase from Azorhizobium caulinodans (strain ATCC 43989 / DSM 5975 / JCM 20966 / LMG 6465 / NBRC 14845 / NCIMB 13405 / ORS 571).